The sequence spans 293 residues: Cell adhesion molecule CEACAM21 (293 aa).

Positions 1 to 34 (MGPPSACPHRECIPWQGLLLTASLLTFWNAPTTA) are cleaved as a signal peptide. At 35-240 (WLFIASAPFE…TVKSDDNTLG (206 aa)) the chain is on the extracellular side. N-linked (GlcNAc...) asparagine glycosylation occurs at Asn-111. In terms of domain architecture, Ig-like C2-type spans 147–231 (PSIQASSTTV…SNRSDPLKLT (85 aa)). An intrachain disulfide couples Cys-166 to Cys-214. A helical transmembrane segment spans residues 241–261 (ILIGVLVGSLLVAALVCFLLL). At 262–293 (RKTGRASDQSDFREQQPPASTPGHGPSDSSIS) the chain is on the cytoplasmic side. Positions 267 to 293 (ASDQSDFREQQPPASTPGHGPSDSSIS) are disordered.

This sequence belongs to the immunoglobulin superfamily. CEA family.

The protein resides in the membrane. The chain is Cell adhesion molecule CEACAM21 from Homo sapiens (Human).